A 141-amino-acid chain; its full sequence is Large ribosomal subunit protein uL16 (141 aa).

Residues 1-17 (MLMPKRTKFRKQMKGRN) show a composition bias toward basic residues. The disordered stretch occupies residues 1-22 (MLMPKRTKFRKQMKGRNRGYAT).

This sequence belongs to the universal ribosomal protein uL16 family. As to quaternary structure, part of the 50S ribosomal subunit.

Functionally, binds 23S rRNA and is also seen to make contacts with the A and possibly P site tRNAs. The polypeptide is Large ribosomal subunit protein uL16 (Campylobacter curvus (strain 525.92)).